The chain runs to 491 residues: NADH-ubiquinone oxidoreductase chain 2 (491 aa).

Transmembrane regions (helical) follow at residues 11-31, 38-58, 74-94, 106-126, 129-149, 161-181, 210-230, 238-258, 270-290, 298-318, 330-350, 375-395, 411-433, and 463-483; these read MIKYSIYILPLIILIVLSISI, VHIIIQSLKLTLIVIMIVIGI, ELIKLFEYLLLGVSYMIIKMF, ITDEGLILIYSSIIGMLISME, NLITLFLSLEISSICFYILAL, LKYYIIGGIATTILLLGIVSI, IALIVLGLILKLGIAPFHGWL, GMLMTFYLTITQKLVTLMVLI, AIMFTNGLIILILVTLVVGTI, LIRFIAYSAIVNSALLILMLA, VYYLINYIIGLTVLMSLIMGF, GAIVYILVLMYLAGLPPMTNF, VYLTMLAFFLSVGVMIYYMNLVK, and IVLGVMWLIFSQLYLDEILNV.

The protein belongs to the complex I subunit 2 family.

It localises to the mitochondrion inner membrane. The catalysed reaction is a ubiquinone + NADH + 5 H(+)(in) = a ubiquinol + NAD(+) + 4 H(+)(out). In terms of biological role, core subunit of the mitochondrial membrane respiratory chain NADH dehydrogenase (Complex I) that is believed to belong to the minimal assembly required for catalysis. Complex I functions in the transfer of electrons from NADH to the respiratory chain. The immediate electron acceptor for the enzyme is believed to be ubiquinone. The protein is NADH-ubiquinone oxidoreductase chain 2 (nad2) of Dictyostelium citrinum (Slime mold).